Reading from the N-terminus, the 221-residue chain is DELTA-actitoxin-Ucs1a (221 aa).

The N-terminal stretch at 1–19 (MNRLIVLCLFVAMIYATIA) is a signal peptide. Residues 20-42 (LPKKEDISNDERSISVSKVPVKK) constitute a propeptide that is removed on maturation. Residues 45–54 (AIAGAVIEGA) form a plays an important role in the hemolytic activity region. Positions 53 to 72 (GAKLTFGILEKILTVLGDIN) are N-terminal region. Phosphocholine is bound by residues serine 96, valine 129, serine 147, proline 149, tyrosine 175, tyrosine 179, and tyrosine 180. The interval 147 to 162 (SVPYDYNLYSNWWNIK) is trp-rich region, which is important for the binding to lipid membrane. Residues 186-188 (KGD) carry the Cell attachment site, crucial for protein stability motif.

Belongs to the actinoporin family. Sea anemone subfamily. In terms of assembly, octamer or nonamer in membranes. Monomer in the soluble state.

It localises to the secreted. The protein resides in the nematocyst. The protein localises to the target cell membrane. Functionally, pore-forming protein that forms cations-selective hydrophilic pores of around 1 nm and causes cytolysis. Pore formation is a multi-step process that involves specific recognition of membrane sphingomyelin (but neither cholesterol nor phosphatidylcholine) using aromatic rich region and adjacent phosphocholine (POC) binding site, firm binding to the membrane (mainly driven by hydrophobic interactions) accompanied by the transfer of the N-terminal region to the lipid-water interface and finally pore formation after oligomerization of monomers. The chain is DELTA-actitoxin-Ucs1a from Urticina crassicornis (Mottled anemone).